We begin with the raw amino-acid sequence, 335 residues long: Gibberellin 2-beta-dioxygenase 3 (335 aa).

A Fe2OG dioxygenase domain is found at 175 to 278 (ESDSCLRMNH…RISMIYFAGP (104 aa)). The Fe cation site is built by His202, Asp204, and His259. The active site involves Arg269.

It belongs to the iron/ascorbate-dependent oxidoreductase family. GA2OX subfamily. Requires Fe(2+) as cofactor. As to expression, not expressed in the apex.

The enzyme catalyses gibberellin A1 + 2-oxoglutarate + O2 = gibberellin A8 + succinate + CO2. Its pathway is plant hormone biosynthesis; gibberellin biosynthesis. Functionally, catalyzes the 2-beta-hydroxylation of several biologically active gibberellins, leading to the homeostatic regulation of their endogenous level. Catabolism of gibberellins (GAs) plays a central role in plant development. Converts GA9/GA20 to GA51/GA29 and GA4/GA1 to GA34/GA8. This chain is Gibberellin 2-beta-dioxygenase 3 (GA2OX3), found in Arabidopsis thaliana (Mouse-ear cress).